The primary structure comprises 285 residues: Octanoyltransferase (285 aa).

Residues 50–277 (LRTPDELWIV…NIAQRHAGDI (228 aa)) form the BPL/LPL catalytic domain. Substrate contacts are provided by residues 89–96 (RGGQVTWH), 189–191 (SLG), and 202–204 (GIA). Residue Cys220 is the Acyl-thioester intermediate of the active site.

This sequence belongs to the LipB family.

The protein resides in the cytoplasm. It carries out the reaction octanoyl-[ACP] + L-lysyl-[protein] = N(6)-octanoyl-L-lysyl-[protein] + holo-[ACP] + H(+). The protein operates within protein modification; protein lipoylation via endogenous pathway; protein N(6)-(lipoyl)lysine from octanoyl-[acyl-carrier-protein]: step 1/2. Functionally, catalyzes the transfer of endogenously produced octanoic acid from octanoyl-acyl-carrier-protein onto the lipoyl domains of lipoate-dependent enzymes. Lipoyl-ACP can also act as a substrate although octanoyl-ACP is likely to be the physiological substrate. This chain is Octanoyltransferase, found in Psychrobacter cryohalolentis (strain ATCC BAA-1226 / DSM 17306 / VKM B-2378 / K5).